A 304-amino-acid chain; its full sequence is Coenzyme PQQ synthesis protein B (304 aa).

Belongs to the PqqB family.

The protein operates within cofactor biosynthesis; pyrroloquinoline quinone biosynthesis. May be involved in the transport of PQQ or its precursor to the periplasm. This Gluconobacter oxydans (strain 621H) (Gluconobacter suboxydans) protein is Coenzyme PQQ synthesis protein B.